The primary structure comprises 434 residues: Glutamate-1-semialdehyde 2,1-aminomutase (434 aa).

At lysine 265 the chain carries N6-(pyridoxal phosphate)lysine.

It belongs to the class-III pyridoxal-phosphate-dependent aminotransferase family. HemL subfamily. In terms of assembly, homodimer. The cofactor is pyridoxal 5'-phosphate.

It is found in the cytoplasm. The enzyme catalyses (S)-4-amino-5-oxopentanoate = 5-aminolevulinate. It functions in the pathway porphyrin-containing compound metabolism; protoporphyrin-IX biosynthesis; 5-aminolevulinate from L-glutamyl-tRNA(Glu): step 2/2. This Ruminiclostridium cellulolyticum (strain ATCC 35319 / DSM 5812 / JCM 6584 / H10) (Clostridium cellulolyticum) protein is Glutamate-1-semialdehyde 2,1-aminomutase.